The primary structure comprises 559 residues: Subtelomeric hrmA-associated cluster protein AFUB_079030 (559 aa).

Disordered stretches follow at residues 163–190 (AKHPYNGGKPPAGAPPGKKGDPEKTKPE), 298–351 (RESN…TGMA), 427–451 (SITSSSPEQTSHHRQAPLPMQHSAS), and 525–559 (FRTGFLSHPCDPSQQAPHSSGCGHPDSWTQNRPHV). Low complexity predominate over residues 169–179 (GGKPPAGAPPG). Composition is skewed to basic and acidic residues over residues 180-189 (KKGDPEKTKP) and 300-325 (SNQKEKDGDSNVDPDQKHEQEDDNAR). Polar residues predominate over residues 336–346 (NSTSPMSNSAE).

Its function is as follows. Part of the subtelomeric hrmA-associated cluster (HAC) containing genes that alter the hyphal surface (such as reduced total chitin or increased beta-glucan exposure) and perturb inter-hyphal interactions within the developing biofilms, resulting in a loss of vertically aligned polarized growing filaments. Consequently, this hypoxia-typic morphotype (called H-MORPH) with altered biofilm architecture leads to increased hypoxia fitness, increased host inflammation, rapid disease progression, and mortality in a murine model of invasive aspergillosis. The protein is Subtelomeric hrmA-associated cluster protein AFUB_079030 of Aspergillus fumigatus (strain CBS 144.89 / FGSC A1163 / CEA10) (Neosartorya fumigata).